Here is a 199-residue protein sequence, read N- to C-terminus: Putative pseudouridine methyltransferase (199 aa).

S-adenosyl-L-methionine contacts are provided by Met-132 and Cys-186.

This sequence belongs to the methyltransferase superfamily. TrmY family.

It is found in the cytoplasm. This is Putative pseudouridine methyltransferase from Vibrio atlanticus (strain LGP32) (Vibrio splendidus (strain Mel32)).